The chain runs to 453 residues: Ribulose bisphosphate carboxylase large chain (453 aa).

The propeptide occupies 1-2; it reads MS. Pro3 is modified (N-acetylproline). Lys14 carries the N6,N6,N6-trimethyllysine modification. The substrate site is built by Asn123 and Thr173. Catalysis depends on Lys175, which acts as the Proton acceptor. Position 177 (Lys177) interacts with substrate. Lys201, Asp203, and Glu204 together coordinate Mg(2+). Lys201 is subject to N6-carboxylysine. His294 acts as the Proton acceptor in catalysis. Substrate contacts are provided by Arg295, His327, and Ser379.

Belongs to the RuBisCO large chain family. Type I subfamily. Heterohexadecamer of 8 large chains and 8 small chains; disulfide-linked. The disulfide link is formed within the large subunit homodimers. It depends on Mg(2+) as a cofactor. In terms of processing, the disulfide bond which can form in the large chain dimeric partners within the hexadecamer appears to be associated with oxidative stress and protein turnover.

It localises to the plastid. The protein localises to the chloroplast. The enzyme catalyses 2 (2R)-3-phosphoglycerate + 2 H(+) = D-ribulose 1,5-bisphosphate + CO2 + H2O. It carries out the reaction D-ribulose 1,5-bisphosphate + O2 = 2-phosphoglycolate + (2R)-3-phosphoglycerate + 2 H(+). RuBisCO catalyzes two reactions: the carboxylation of D-ribulose 1,5-bisphosphate, the primary event in carbon dioxide fixation, as well as the oxidative fragmentation of the pentose substrate in the photorespiration process. Both reactions occur simultaneously and in competition at the same active site. The protein is Ribulose bisphosphate carboxylase large chain of Galium palustre (Common marsh bedstraw).